A 171-amino-acid polypeptide reads, in one-letter code: 3-hydroxydecanoyl-[acyl-carrier-protein] dehydratase (171 aa).

Residue His70 is part of the active site.

Belongs to the thioester dehydratase family. FabA subfamily. In terms of assembly, homodimer.

The protein localises to the cytoplasm. It carries out the reaction a (3R)-hydroxyacyl-[ACP] = a (2E)-enoyl-[ACP] + H2O. The enzyme catalyses (3R)-hydroxydecanoyl-[ACP] = (2E)-decenoyl-[ACP] + H2O. The catalysed reaction is (2E)-decenoyl-[ACP] = (3Z)-decenoyl-[ACP]. Its pathway is lipid metabolism; fatty acid biosynthesis. Its function is as follows. Necessary for the introduction of cis unsaturation into fatty acids. Catalyzes the dehydration of (3R)-3-hydroxydecanoyl-ACP to E-(2)-decenoyl-ACP and then its isomerization to Z-(3)-decenoyl-ACP. Can catalyze the dehydratase reaction for beta-hydroxyacyl-ACPs with saturated chain lengths up to 16:0, being most active on intermediate chain length. The protein is 3-hydroxydecanoyl-[acyl-carrier-protein] dehydratase of Azotobacter vinelandii (strain DJ / ATCC BAA-1303).